Here is a 504-residue protein sequence, read N- to C-terminus: ATP synthase subunit alpha (504 aa).

Position 169–176 (169–176) interacts with ATP; the sequence is GDRQTGKT.

It belongs to the ATPase alpha/beta chains family. F-type ATPases have 2 components, CF(1) - the catalytic core - and CF(0) - the membrane proton channel. CF(1) has five subunits: alpha(3), beta(3), gamma(1), delta(1), epsilon(1). CF(0) has three main subunits: a(1), b(2) and c(9-12). The alpha and beta chains form an alternating ring which encloses part of the gamma chain. CF(1) is attached to CF(0) by a central stalk formed by the gamma and epsilon chains, while a peripheral stalk is formed by the delta and b chains.

The protein localises to the cell membrane. The enzyme catalyses ATP + H2O + 4 H(+)(in) = ADP + phosphate + 5 H(+)(out). Its function is as follows. Produces ATP from ADP in the presence of a proton gradient across the membrane. The alpha chain is a regulatory subunit. The chain is ATP synthase subunit alpha from Clostridium kluyveri (strain NBRC 12016).